Here is a 222-residue protein sequence, read N- to C-terminus: Glutathione S-transferase A4 (222 aa).

Met-1 is modified (N-acetylmethionine). The GST N-terminal domain maps to 3 to 83; sequence ARPKLHYPNG…YIADKHNLFG (81 aa). Residues Tyr-9, 54-55, and 67-68 each bind glutathione; these read QV and QT. The GST C-terminal domain occupies 85–208; sequence NLKERTLIDM…EPGSKKKPPP (124 aa). Tyr-212 lines the substrate pocket.

This sequence belongs to the GST superfamily. Alpha family. In terms of assembly, homodimer. As to expression, expressed at a high level in brain, placenta, and skeletal muscle and much lower in lung and liver.

It is found in the cytoplasm. The enzyme catalyses RX + glutathione = an S-substituted glutathione + a halide anion + H(+). In terms of biological role, conjugation of reduced glutathione to a wide number of exogenous and endogenous hydrophobic electrophiles. This isozyme has a high catalytic efficiency with 4-hydroxyalkenals such as 4-hydroxynonenal (4-HNE). The sequence is that of Glutathione S-transferase A4 (GSTA4) from Homo sapiens (Human).